Here is a 564-residue protein sequence, read N- to C-terminus: Kelch repeat and BTB domain-containing protein A55 (564 aa).

The BTB domain maps to 21–88; that stretch reads CDISIVINDE…IYGIPLSLTN (68 aa). Kelch repeat units lie at residues 252-297, 298-346, 347-395, 397-441, 442-492, and 494-539; these read IELI…VLDN, IIYM…ADDE, YIYC…MLNG, IYVM…VHDG, KIYI…SAHN, and LYVG…CEPI.

It belongs to the poxviruses A55 protein family. Interacts (via BTB domain) with host CUL3.

It is found in the host cytoplasm. Functionally, probable substrate-specific adapter of CUL3-containing E3 ubiquitin-protein ligases which mediate the ubiquitination and subsequent proteasomal degradation of host target proteins. In Bos taurus (Bovine), this protein is Kelch repeat and BTB domain-containing protein A55 (KBTB1).